Reading from the N-terminus, the 548-residue chain is MAAKEVKFGDSARKKMLVGVNVLADAVKATLGPKGRNVVLAKSFGAPTITKDGVSVAKEIELKDAFENMGAQLVKDVASKANDAAGDGTTTATVLAQAIVNEGLKSVAAGMNPMDLKRGIDKATSAIVAQLKDLAKPCADSKAIAQVGTISANSDNSIGDIIAEAMDKVGKEGVITVEEGSGLENELSVVEGMQFDRGYLSPYFINKPDTMVAELEGPLLLLVDKKISNIRELLPVLEAVAKAGRPLLIVAEDVEGEALATLVVNNMRGIVKVAAVKAPGFGDRRKAMLQDIAILTGGTVISEEVGLSLESATLEHLGNAKRVVLNKDNTTIIDGAGAQADIEARVAQIRKQVEETSSDYDKEKLQERLAKLAGGVAVIKVGAATEVEMKEKKARVEDALHATRAAVEEGVVPGGGVALVRALQAIEGLKGDNEDQNVGIALLRRAVEAPLRQIVANAGGEPSVVVDKVKQGSGNFGFNAATDTYGDMIEMGILDPAKVTRSALQAAASIGGLMITTEAMVAEAADDKAPAMPDMGGMGGMGGMGGMM.

ATP-binding positions include 30 to 33, Lys51, 87 to 91, Gly415, 479 to 481, and Asp495; these read TLGP, DGTTT, and NAA.

The protein belongs to the chaperonin (HSP60) family. Forms a cylinder of 14 subunits composed of two heptameric rings stacked back-to-back. Interacts with the co-chaperonin GroES.

It localises to the cytoplasm. The catalysed reaction is ATP + H2O + a folded polypeptide = ADP + phosphate + an unfolded polypeptide.. Its function is as follows. Together with its co-chaperonin GroES, plays an essential role in assisting protein folding. The GroEL-GroES system forms a nano-cage that allows encapsulation of the non-native substrate proteins and provides a physical environment optimized to promote and accelerate protein folding. This is Chaperonin GroEL from Ectopseudomonas mendocina (strain ymp) (Pseudomonas mendocina).